The sequence spans 161 residues: Regulator of ribonuclease activity A (161 aa).

This sequence belongs to the RraA family. As to quaternary structure, homotrimer. Binds to both RNA-binding sites in the C-terminal region of Rne and to RhlB.

Its subcellular location is the cytoplasm. In terms of biological role, globally modulates RNA abundance by binding to RNase E (Rne) and regulating its endonucleolytic activity. Can modulate Rne action in a substrate-dependent manner by altering the composition of the degradosome. Modulates RNA-binding and helicase activities of the degradosome. The chain is Regulator of ribonuclease activity A from Edwardsiella ictaluri (strain 93-146).